The sequence spans 192 residues: UPF0301 protein Jann_3896 (192 aa).

It belongs to the UPF0301 (AlgH) family.

The polypeptide is UPF0301 protein Jann_3896 (Jannaschia sp. (strain CCS1)).